Consider the following 534-residue polypeptide: MERLADRVILVWGFKRSLLAIAAGAFAVLALPPFGFFAAMFLSFTLLVWLIDGAAASPDSGLVGRLWPAFATGWLFGFGYFVAGLWWLGHALLVDQDEFAWALPLAILGLPACLAIFYGLAVALARIFWSDGMGRIAALAAGFGLMEWLRSVVLTGFPWNAIGYGMMPVPLMMQSAHVIGAMGVTALAVFVFSAPALAGTRQGARNGTALAVLLFAAHLGYGAYALYVAPRAEALPEDKRPVVRLVQPDIDQAAKMDNDADRNAIFETHLKLSAETPKNGGRKPDIIVWPETAIPFILTDNQDALTRIADTLDDNQILIAGAVRAEEMGPGTPTRYYNSIYVIDGRGQIIAASDKVHLVPFGEYLPFEDLLTEFGIQNVVEMPGGFSAAVSRHLLALPGGLNLYPLICYEIIFPDEMTSDIEDANAILNITNDAWFGATPGPYQHFQQARVRAVETGLPLIRDANSGISAIVNAQGEIIAGLDLEQTGFIDATVDRFGLEAGTTFPRQTYFWLTEALLILIALVSRRGFISGLN.

The next 7 helical transmembrane spans lie at 18–38, 39–59, 74–94, 105–125, 127–147, 178–198, and 209–229; these read LLAI…GFFA, AMFL…ASPD, WLFG…ALLV, LAIL…VALA, IFWS…GLME, VIGA…PALA, and ALAV…LYVA. The CN hydrolase domain occupies 246-496; sequence VQPDIDQAAK…TGFIDATVDR (251 aa). Catalysis depends on Glu-291, which acts as the Proton acceptor. Lys-355 is a catalytic residue. Cys-408 serves as the catalytic Nucleophile. The chain crosses the membrane as a helical span at residues 504-524; it reads TFPRQTYFWLTEALLILIALV.

This sequence belongs to the CN hydrolase family. Apolipoprotein N-acyltransferase subfamily.

It is found in the cell inner membrane. It catalyses the reaction N-terminal S-1,2-diacyl-sn-glyceryl-L-cysteinyl-[lipoprotein] + a glycerophospholipid = N-acyl-S-1,2-diacyl-sn-glyceryl-L-cysteinyl-[lipoprotein] + a 2-acyl-sn-glycero-3-phospholipid + H(+). Its pathway is protein modification; lipoprotein biosynthesis (N-acyl transfer). Catalyzes the phospholipid dependent N-acylation of the N-terminal cysteine of apolipoprotein, the last step in lipoprotein maturation. In Rhizobium leguminosarum bv. trifolii (strain WSM2304), this protein is Apolipoprotein N-acyltransferase.